A 300-amino-acid chain; its full sequence is MPETPIDPDLTAQVLVEALPYIRRFRGKTIVVKFGGNAMVDEALKVAFARDIVLMRLVGFRVVVVHGGGPQIGNLLERIGKETEFVQGMRVTDAETMDVVEMVLGGLVNKEIVNLISAQGGRAVGLTGKDGGLIRARKLEVEQPGPENQVPEIIDIGHVGEVDHIDPAVVEMLDSGEFIPVVAPIGVDERGTSYNINADLVAGKIAEVLSAEKLLLLTNTPGVLDGAGHLLTGLSPERVDELIADGTIAGGMLPKIRCALDAVAGGVRNAHIIDGRVPHAVLLELFTDKGVGTLIRRQPE.

Residues 68–69 (GG), arginine 90, and asparagine 195 contribute to the substrate site.

This sequence belongs to the acetylglutamate kinase family. ArgB subfamily.

Its subcellular location is the cytoplasm. The enzyme catalyses N-acetyl-L-glutamate + ATP = N-acetyl-L-glutamyl 5-phosphate + ADP. It participates in amino-acid biosynthesis; L-arginine biosynthesis; N(2)-acetyl-L-ornithine from L-glutamate: step 2/4. Functionally, catalyzes the ATP-dependent phosphorylation of N-acetyl-L-glutamate. This chain is Acetylglutamate kinase, found in Halorhodospira halophila (strain DSM 244 / SL1) (Ectothiorhodospira halophila (strain DSM 244 / SL1)).